We begin with the raw amino-acid sequence, 272 residues long: Phosphate import ATP-binding protein PstB (272 aa).

The ABC transporter domain maps to 26–267; the sequence is LEIRNLDLRY…PKKRKTEDYI (242 aa). 58–65 contributes to the ATP binding site; it reads GPSGCGKS.

This sequence belongs to the ABC transporter superfamily. Phosphate importer (TC 3.A.1.7) family. In terms of assembly, the complex is composed of two ATP-binding proteins (PstB), two transmembrane proteins (PstC and PstA) and a solute-binding protein (PstS).

It is found in the cell inner membrane. It catalyses the reaction phosphate(out) + ATP + H2O = ADP + 2 phosphate(in) + H(+). In terms of biological role, part of the ABC transporter complex PstSACB involved in phosphate import. Responsible for energy coupling to the transport system. This is Phosphate import ATP-binding protein PstB from Shewanella frigidimarina (strain NCIMB 400).